Reading from the N-terminus, the 333-residue chain is MIDTTLPLTDIHRHLDGNIRPQTILELGRQYNISLPAQSLETLIPHVQVIANEPDLVSFLTKLDWGVKVLASLDACRRVAFENIEDAARNGLHYVELRFSPGYMAMAHQLPVAGVVEAVIDGVREGCRTFGVQAKLIGIMSRTFGEAACQQELEAFLAHRDQITALDLAGDELGFPGSLFLSHFNRARDAGWHITVHAGEAAGPESIWQAIRELGAERIGHGVKAIEDRALMDFLAEQQIGIESCLTSNIQTSTVAELAAHPLKTFLEHGIRASINTDDPGVQGVDIIHEYTVAAPAAGLSREQIRQAQINGLEMAFLNAEEKRALREKVAAK.

The Zn(2+) site is built by His-12 and His-14. Substrate-binding residues include His-14, Asp-16, and Gly-170. Residue His-197 coordinates Zn(2+). Catalysis depends on Glu-200, which acts as the Proton donor. Residue Asp-278 participates in Zn(2+) binding. Substrate is bound at residue Asp-279.

This sequence belongs to the metallo-dependent hydrolases superfamily. Adenosine and AMP deaminases family. Adenosine deaminase subfamily. Zn(2+) serves as cofactor.

The enzyme catalyses adenosine + H2O + H(+) = inosine + NH4(+). It carries out the reaction 2'-deoxyadenosine + H2O + H(+) = 2'-deoxyinosine + NH4(+). Its function is as follows. Catalyzes the hydrolytic deamination of adenosine and 2-deoxyadenosine. This chain is Adenosine deaminase, found in Escherichia coli O157:H7.